Here is a 189-residue protein sequence, read N- to C-terminus: Myb-like protein T (189 aa).

Residues 121 to 172 (NWSPDEQKALMVEVSTLGNKSEINWFFISQQLFLKGISRNARECQRKHESIQ) enclose the Myb-like domain.

This Dictyostelium discoideum (Social amoeba) protein is Myb-like protein T (mybT).